Reading from the N-terminus, the 308-residue chain is Acetyl-coenzyme A carboxylase carboxyl transferase subunit beta 1 (308 aa).

The CoA carboxyltransferase N-terminal domain occupies 25 to 294 (VWTKCTSCEQ…PMVVSVNESP (270 aa)). Residues cysteine 29, cysteine 32, cysteine 48, and cysteine 51 each contribute to the Zn(2+) site. The C4-type zinc-finger motif lies at 29-51 (CTSCEQVLYHAELERNLEVCPKC). A disordered region spans residues 289-308 (SVNESPNEEPYSVPEADEKG).

Belongs to the AccD/PCCB family. As to quaternary structure, acetyl-CoA carboxylase is a heterohexamer composed of biotin carboxyl carrier protein (AccB), biotin carboxylase (AccC) and two subunits each of ACCase subunit alpha (AccA) and ACCase subunit beta (AccD). Zn(2+) is required as a cofactor.

The protein localises to the cytoplasm. The catalysed reaction is N(6)-carboxybiotinyl-L-lysyl-[protein] + acetyl-CoA = N(6)-biotinyl-L-lysyl-[protein] + malonyl-CoA. It participates in lipid metabolism; malonyl-CoA biosynthesis; malonyl-CoA from acetyl-CoA: step 1/1. In terms of biological role, component of the acetyl coenzyme A carboxylase (ACC) complex. Biotin carboxylase (BC) catalyzes the carboxylation of biotin on its carrier protein (BCCP) and then the CO(2) group is transferred by the transcarboxylase to acetyl-CoA to form malonyl-CoA. In Vibrio campbellii (strain ATCC BAA-1116), this protein is Acetyl-coenzyme A carboxylase carboxyl transferase subunit beta 1.